The chain runs to 513 residues: ATP synthase subunit alpha (513 aa).

171 to 178 (GDRQIGKT) provides a ligand contact to ATP.

Belongs to the ATPase alpha/beta chains family. F-type ATPases have 2 components, CF(1) - the catalytic core - and CF(0) - the membrane proton channel. CF(1) has five subunits: alpha(3), beta(3), gamma(1), delta(1), epsilon(1). CF(0) has three main subunits: a(1), b(2) and c(9-12). The alpha and beta chains form an alternating ring which encloses part of the gamma chain. CF(1) is attached to CF(0) by a central stalk formed by the gamma and epsilon chains, while a peripheral stalk is formed by the delta and b chains.

The protein localises to the cell inner membrane. The catalysed reaction is ATP + H2O + 4 H(+)(in) = ADP + phosphate + 5 H(+)(out). Functionally, produces ATP from ADP in the presence of a proton gradient across the membrane. The alpha chain is a regulatory subunit. The polypeptide is ATP synthase subunit alpha (Wolbachia sp. subsp. Drosophila simulans (strain wRi)).